A 250-amino-acid polypeptide reads, in one-letter code: Adenosylcobinamide-GDP ribazoletransferase (250 aa).

The next 6 membrane-spanning stretches (helical) occupy residues 31 to 51 (ISYLPLVGLIIGGFNAIVYFV), 55 to 75 (FILGTLPIVLALLANTIITGA), 106 to 126 (VGTNGAIAIVFDFMLRYAVLN), 133 to 153 (IIIALILSPVVAKTVVTLLMC), 187 to 207 (IGYVLIGYKYVALLLITVLFI), and 230 to 250 (NEIAEIIFMLALLSFKGCGLL).

Belongs to the CobS family. Requires Mg(2+) as cofactor.

The protein localises to the cell membrane. The enzyme catalyses alpha-ribazole + adenosylcob(III)inamide-GDP = adenosylcob(III)alamin + GMP + H(+). It catalyses the reaction alpha-ribazole 5'-phosphate + adenosylcob(III)inamide-GDP = adenosylcob(III)alamin 5'-phosphate + GMP + H(+). It functions in the pathway cofactor biosynthesis; adenosylcobalamin biosynthesis; adenosylcobalamin from cob(II)yrinate a,c-diamide: step 7/7. Functionally, joins adenosylcobinamide-GDP and alpha-ribazole to generate adenosylcobalamin (Ado-cobalamin). Also synthesizes adenosylcobalamin 5'-phosphate from adenosylcobinamide-GDP and alpha-ribazole 5'-phosphate. The polypeptide is Adenosylcobinamide-GDP ribazoletransferase (Clostridium novyi (strain NT)).